Consider the following 303-residue polypeptide: MQPQELKTIMGSGLLSFPLTDFDSEGHFNARGYAERLEWLAPYGASALFAAGGTGEFFSLTADEYPAIIETAVQTCRGKVPIIAGAGGPTRFAIQCAQAAEKAGAHGILLLPHYLTEAGQEGLAAHVEAVCKSVKFGVIVYNRGQSRFTPETLARLAERNANLVGFKDGVGDIELMNSIYMKMGDRFAYLGGLPTAEVYAAAYKALGTPVYSSAVFNFIPKTAMDFYHAVANDDQATQHRLLRSFFMPYLALRNRMPGYAVSIVKAGAKIVGHDAGPVRAPLTDLKADEMAALKALIDQLGPQ.

It belongs to the DapA family.

It carries out the reaction 5-dehydro-4-deoxy-D-glucarate + H(+) = 2,5-dioxopentanoate + CO2 + H2O. It functions in the pathway carbohydrate acid metabolism; D-glucarate degradation; 2,5-dioxopentanoate from D-glucarate: step 2/2. The chain is Probable 5-dehydro-4-deoxyglucarate dehydratase from Paracidovorax citrulli (strain AAC00-1) (Acidovorax citrulli).